The sequence spans 342 residues: MGHRKLSSPRRGSAGLRPRKRADEILPTPKNWPLVNLKEPKLLGFIGYKAGMTHVYMIDDKPTSPNYGKEVYTPVTIVESPPILGLALRAYHIDSKGELSVLVDYWANFEEGSLKYLKRKITSLKVDSSKMKEKLDLIQKNLNNITYMRLLVSTQPWLVPSLGKKRPEIVEIQIGGGSIQDQLNYGLSLLGKQIPVRDVFREGQLTDIIGVTKGKGFQGVIKRYSVVEFPRWHKHRKGSRKIGARGPSISTPSYVPQPGQLGFHRRTEYNKRIIKIGDNVNEINPAGGIVNYGLVKNTYLVIEGSVLGSRKRPLFLRYPIRPSWSPESAPKITYVNLASQQG.

Residues 1-22 (MGHRKLSSPRRGSAGLRPRKRA) form a disordered region.

The protein belongs to the universal ribosomal protein uL3 family. In terms of assembly, part of the 50S ribosomal subunit. Forms a cluster with proteins L14 and L24e.

One of the primary rRNA binding proteins, it binds directly near the 3'-end of the 23S rRNA, where it nucleates assembly of the 50S subunit. In Sulfolobus acidocaldarius (strain ATCC 33909 / DSM 639 / JCM 8929 / NBRC 15157 / NCIMB 11770), this protein is Large ribosomal subunit protein uL3.